Consider the following 619-residue polypeptide: ESX-2 secretion system protein EccA2 (619 aa).

ATP is bound at residue 373 to 380 (GPPGTGKT).

The protein belongs to the CbxX/CfxQ family. In terms of assembly, part of the ESX-2 / type VII secretion system (T7SS), which is composed of cytosolic and membrane components. Residues 522-619 interact with an artificial EsxB-EsxA heterodimer from the adjacent ESX-1 locus.

Its subcellular location is the cytoplasm. Shows ATPase activity. Could provide energy for export of ESX-2 substrates. This is ESX-2 secretion system protein EccA2 (eccA2) from Mycobacterium tuberculosis (strain ATCC 25618 / H37Rv).